Consider the following 234-residue polypeptide: UPF0173 metal-dependent hydrolase RHE_CH01853 (234 aa).

It belongs to the UPF0173 family.

This is UPF0173 metal-dependent hydrolase RHE_CH01853 from Rhizobium etli (strain ATCC 51251 / DSM 11541 / JCM 21823 / NBRC 15573 / CFN 42).